We begin with the raw amino-acid sequence, 463 residues long: Kynurenine 3-monooxygenase (463 aa).

The protein belongs to the aromatic-ring hydroxylase family. KMO subfamily. The cofactor is FAD.

It is found in the mitochondrion outer membrane. It carries out the reaction L-kynurenine + NADPH + O2 + H(+) = 3-hydroxy-L-kynurenine + NADP(+) + H2O. It participates in cofactor biosynthesis; NAD(+) biosynthesis; quinolinate from L-kynurenine: step 1/3. Functionally, catalyzes the hydroxylation of L-kynurenine (L-Kyn) to form 3-hydroxy-L-kynurenine (L-3OHKyn). Required for synthesis of quinolinic acid. The protein is Kynurenine 3-monooxygenase of Yarrowia lipolytica (strain CLIB 122 / E 150) (Yeast).